The chain runs to 136 residues: Transcription antitermination protein NusB (136 aa).

This sequence belongs to the NusB family.

Functionally, involved in transcription antitermination. Required for transcription of ribosomal RNA (rRNA) genes. Binds specifically to the boxA antiterminator sequence of the ribosomal RNA (rrn) operons. The sequence is that of Transcription antitermination protein NusB from Kineococcus radiotolerans (strain ATCC BAA-149 / DSM 14245 / SRS30216).